A 297-amino-acid chain; its full sequence is 1D-myo-inositol 2-acetamido-2-deoxy-alpha-D-glucopyranoside deacetylase (297 aa).

Zn(2+) contacts are provided by His-11, Asp-14, and His-154.

This sequence belongs to the MshB deacetylase family. Zn(2+) serves as cofactor.

It catalyses the reaction 1D-myo-inositol 2-acetamido-2-deoxy-alpha-D-glucopyranoside + H2O = 1D-myo-inositol 2-amino-2-deoxy-alpha-D-glucopyranoside + acetate. In terms of biological role, catalyzes the deacetylation of 1D-myo-inositol 2-acetamido-2-deoxy-alpha-D-glucopyranoside (GlcNAc-Ins) in the mycothiol biosynthesis pathway. This chain is 1D-myo-inositol 2-acetamido-2-deoxy-alpha-D-glucopyranoside deacetylase, found in Tsukamurella paurometabola (strain ATCC 8368 / DSM 20162 / CCUG 35730 / CIP 100753 / JCM 10117 / KCTC 9821 / NBRC 16120 / NCIMB 702349 / NCTC 13040) (Corynebacterium paurometabolum).